The chain runs to 146 residues: Transcription antitermination protein NusB (146 aa).

Belongs to the NusB family.

Involved in transcription antitermination. Required for transcription of ribosomal RNA (rRNA) genes. Binds specifically to the boxA antiterminator sequence of the ribosomal RNA (rrn) operons. This is Transcription antitermination protein NusB from Solibacter usitatus (strain Ellin6076).